Consider the following 336-residue polypeptide: Probable carboxylesterase 6 (336 aa).

The tract at residues Met1–His20 is disordered. The span at Thr7 to Ile19 shows a compositional bias: polar residues. The short motif at His96–Gly98 is the Involved in the stabilization of the negatively charged intermediate by the formation of the oxyanion hole element. Active-site residues include Ser176, Asp276, and His303.

It belongs to the 'GDXG' lipolytic enzyme family. Expressed in roots, leaves, flowers and siliques.

The catalysed reaction is a carboxylic ester + H2O = an alcohol + a carboxylate + H(+). Its function is as follows. Carboxylesterase acting on esters with varying acyl chain length. This is Probable carboxylesterase 6 (CXE6) from Arabidopsis thaliana (Mouse-ear cress).